A 260-amino-acid polypeptide reads, in one-letter code: FAS1 domain-containing protein SELMODRAFT_448915 (260 aa).

The Cytoplasmic segment spans residues 1–35; that stretch reads MRRTGRSYKPLLSQLKDHHIPVHPSSRAERAMESR. The helical transmembrane segment at 36–58 threads the bilayer; that stretch reads TLLVLLFVGVVTIVSSGLERAAA. Residues 59–198 form the FAS1 domain; sequence QDDTDDGILP…IACHGIDRVL (140 aa). Topologically, residues 59–260 are extracellular; sequence QDDTDDGILP…SSASRYPVSE (202 aa). N-linked (GlcNAc...) asparagine glycosylation is found at Asn118, Asn169, Asn176, Asn201, Asn236, and Asn247. The tract at residues 210 to 260 is disordered; that stretch reads PEASPPFGAEQASPAPEALPPGTRSPNNTANPSNRKSNSTRSSASRYPVSE. Residues 233-254 are compositionally biased toward polar residues; sequence RSPNNTANPSNRKSNSTRSSAS.

The protein resides in the membrane. This chain is FAS1 domain-containing protein SELMODRAFT_448915, found in Selaginella moellendorffii (Spikemoss).